The chain runs to 493 residues: Ketol-acid reductoisomerase (NADP(+)) (493 aa).

One can recognise a KARI N-terminal Rossmann domain in the interval 14-208; that stretch reads LDQLGRCRFM…GGDRAGVLES (195 aa). NADP(+)-binding positions include 45–48, Arg-68, Arg-76, Ser-78, and 108–110; these read CGAQ and DKQ. His-132 is a catalytic residue. NADP(+) is bound at residue Gly-158. KARI C-terminal knotted domains lie at 209 to 345 and 346 to 486; these read SFVA…APKA and DGIK…MTDM. Residues Asp-217, Glu-221, Glu-390, and Glu-394 each coordinate Mg(2+). Ser-415 lines the substrate pocket.

This sequence belongs to the ketol-acid reductoisomerase family. It depends on Mg(2+) as a cofactor.

It catalyses the reaction (2R)-2,3-dihydroxy-3-methylbutanoate + NADP(+) = (2S)-2-acetolactate + NADPH + H(+). It carries out the reaction (2R,3R)-2,3-dihydroxy-3-methylpentanoate + NADP(+) = (S)-2-ethyl-2-hydroxy-3-oxobutanoate + NADPH + H(+). It participates in amino-acid biosynthesis; L-isoleucine biosynthesis; L-isoleucine from 2-oxobutanoate: step 2/4. Its pathway is amino-acid biosynthesis; L-valine biosynthesis; L-valine from pyruvate: step 2/4. Involved in the biosynthesis of branched-chain amino acids (BCAA). Catalyzes an alkyl-migration followed by a ketol-acid reduction of (S)-2-acetolactate (S2AL) to yield (R)-2,3-dihydroxy-isovalerate. In the isomerase reaction, S2AL is rearranged via a Mg-dependent methyl migration to produce 3-hydroxy-3-methyl-2-ketobutyrate (HMKB). In the reductase reaction, this 2-ketoacid undergoes a metal-dependent reduction by NADPH to yield (R)-2,3-dihydroxy-isovalerate. The polypeptide is Ketol-acid reductoisomerase (NADP(+)) (Actinobacillus succinogenes (strain ATCC 55618 / DSM 22257 / CCUG 43843 / 130Z)).